Consider the following 149-residue polypeptide: 3-dehydroquinate dehydratase (149 aa).

Tyrosine 26 acts as the Proton acceptor in catalysis. Substrate is bound by residues asparagine 77, histidine 83, and aspartate 90. The active-site Proton donor is the histidine 103. Substrate-binding positions include 104–105 (LS) and arginine 114.

It belongs to the type-II 3-dehydroquinase family. In terms of assembly, homododecamer.

It catalyses the reaction 3-dehydroquinate = 3-dehydroshikimate + H2O. It functions in the pathway metabolic intermediate biosynthesis; chorismate biosynthesis; chorismate from D-erythrose 4-phosphate and phosphoenolpyruvate: step 3/7. Functionally, catalyzes a trans-dehydration via an enolate intermediate. This chain is 3-dehydroquinate dehydratase, found in Vibrio vulnificus (strain YJ016).